A 402-amino-acid chain; its full sequence is Phosphomevalonate dehydratase large subunit (402 aa).

The (R)-5-phosphomevalonate site is built by glycine 48, alanine 49, serine 50, asparagine 79, and proline 80. Cysteine 122 is a binding site for [4Fe-4S] cluster. Glutamate 145 and serine 146 together coordinate (R)-5-phosphomevalonate. 2 residues coordinate [4Fe-4S] cluster: cysteine 297 and cysteine 356. Lysine 377 contributes to the (R)-5-phosphomevalonate binding site.

Belongs to the AcnX type II large subunit family. In terms of assembly, heterodimer composed of a large subunit (PMDh-L) and a small subunit (PMDh-S). [4Fe-4S] cluster serves as cofactor.

It catalyses the reaction (R)-5-phosphomevalonate = (2E)-3-methyl-5-phosphooxypent-2-enoate + H2O. It functions in the pathway isoprenoid biosynthesis; isopentenyl diphosphate biosynthesis via mevalonate pathway. Neither the addition of 1 mM Mg(2+) nor 1 mM Mn(2+) has a significant effect on the activity, whereas Zn(2+) causes almost complete inactivation. Strongly inhibited by H(2)O(2), but not by EDTA or iodoacetamide. Component of a hydro-lyase that catalyzes the dehydration of mevalonate 5-phosphate (MVA5P) to form trans-anhydromevalonate 5-phosphate (tAHMP). Involved in the archaeal mevalonate (MVA) pathway, which provides fundamental precursors for isoprenoid biosynthesis, such as isopentenyl diphosphate (IPP) and dimethylallyl diphosphate (DMAPP). The chain is Phosphomevalonate dehydratase large subunit from Aeropyrum pernix (strain ATCC 700893 / DSM 11879 / JCM 9820 / NBRC 100138 / K1).